Consider the following 173-residue polypeptide: MTTIVCVRKDGKVAIGGDGQATLGNCIEKGTVRKVRRLYKDKVVTGFAGSTADAFILRDLFEKKLELHQGHLVKSAVELAKEWRTERALRRLEAMMIVANDSEFLLVSGSGDVIEPEQDVLAIGSGGNYAKAAALALLRTENNLSAKEIVAEALKIAGDIDIYSNYNHVIEEV.

Thr2 is a catalytic residue. Na(+) is bound by residues Gly158, Asp161, and Ser164.

This sequence belongs to the peptidase T1B family. HslV subfamily. As to quaternary structure, a double ring-shaped homohexamer of HslV is capped on each side by a ring-shaped HslU homohexamer. The assembly of the HslU/HslV complex is dependent on binding of ATP.

Its subcellular location is the cytoplasm. It catalyses the reaction ATP-dependent cleavage of peptide bonds with broad specificity.. With respect to regulation, allosterically activated by HslU binding. In terms of biological role, protease subunit of a proteasome-like degradation complex believed to be a general protein degrading machinery. This Mannheimia haemolytica (Pasteurella haemolytica) protein is ATP-dependent protease subunit HslV.